The sequence spans 98 residues: uncharacterized protein (98 aa).

This is an uncharacterized protein from Enterobacteria phage T4 (Bacteriophage T4).